The primary structure comprises 300 residues: Transcription initiation factor IIB (300 aa).

The TFIIB-type zinc-finger motif lies at 2–34 (TKQKVCPVCGSTEFIYDPERGEIVCARCGYVIE). Residues Cys-7, Cys-10, Cys-26, and Cys-29 each contribute to the Zn(2+) site. Repeat copies occupy residues 114-197 (SELD…ARNL) and 210-291 (DYVN…ELVE).

The protein belongs to the TFIIB family.

Its function is as follows. Stabilizes TBP binding to an archaeal box-A promoter. Also responsible for recruiting RNA polymerase II to the pre-initiation complex (DNA-TBP-TFIIB). In Pyrococcus horikoshii (strain ATCC 700860 / DSM 12428 / JCM 9974 / NBRC 100139 / OT-3), this protein is Transcription initiation factor IIB.